A 252-amino-acid polypeptide reads, in one-letter code: 2-succinyl-6-hydroxy-2,4-cyclohexadiene-1-carboxylate synthase (252 aa).

The protein belongs to the AB hydrolase superfamily. MenH family. As to quaternary structure, monomer.

The catalysed reaction is 5-enolpyruvoyl-6-hydroxy-2-succinyl-cyclohex-3-ene-1-carboxylate = (1R,6R)-6-hydroxy-2-succinyl-cyclohexa-2,4-diene-1-carboxylate + pyruvate. It participates in quinol/quinone metabolism; 1,4-dihydroxy-2-naphthoate biosynthesis; 1,4-dihydroxy-2-naphthoate from chorismate: step 3/7. It functions in the pathway quinol/quinone metabolism; menaquinone biosynthesis. Catalyzes a proton abstraction reaction that results in 2,5-elimination of pyruvate from 2-succinyl-5-enolpyruvyl-6-hydroxy-3-cyclohexene-1-carboxylate (SEPHCHC) and the formation of 2-succinyl-6-hydroxy-2,4-cyclohexadiene-1-carboxylate (SHCHC). The chain is 2-succinyl-6-hydroxy-2,4-cyclohexadiene-1-carboxylate synthase from Salmonella agona (strain SL483).